Consider the following 84-residue polypeptide: Defensin-like protein 37 (84 aa).

The N-terminal stretch at 1–24 (MAVKLIYLFLFLYIALLISGRTMS) is a signal peptide. Intrachain disulfides connect cysteine 46/cysteine 67, cysteine 52/cysteine 79, and cysteine 56/cysteine 81.

This sequence belongs to the DEFL family.

It is found in the secreted. The protein is Defensin-like protein 37 (EDA21) of Arabidopsis thaliana (Mouse-ear cress).